Here is a 343-residue protein sequence, read N- to C-terminus: UBP1-associated proteins 1A (343 aa).

The disordered stretch occupies residues 1–61; the sequence is MAKTLDKSKK…SESDNEFDPE (61 aa). The segment covering 28–49 has biased composition (low complexity); that stretch reads NKQQQQPESSTPYSSSSSSSDS. Acidic residues predominate over residues 50-61; that stretch reads SDSESDNEFDPE. Residues 104 to 181 form the RRM domain; it reads RKIFVYGLPW…RTATCQLASM (78 aa). A disordered region spans residues 312-343; it reads STYPDSDAGGKRGTGKDSDAGGSSFHGYSNYS. A compositionally biased stretch (basic and acidic residues) spans 319-330; the sequence is AGGKRGTGKDSD.

Interacts with UBA1A, UBA2A, UBP1A, UBP1B and UBP1C.

It is found in the nucleus. Its function is as follows. Acts as a component of a complex regulating the turnover of mRNAs in the nucleus. Binds with high affinity to RNA molecules that contain U-rich sequences in 3'-UTRs. May function in complex with UBP1 and contribute to the stabilization of mRNAs in the nucleus. However, unlike UBP1, UBA1A does not stimulate pre-mRNA splicing. The sequence is that of UBP1-associated proteins 1A (UBA1A) from Arabidopsis thaliana (Mouse-ear cress).